Here is a 312-residue protein sequence, read N- to C-terminus: Ribonuclease H2 subunit B (312 aa).

A2 is subject to N-acetylalanine. Residues 236-256 form a disordered region; sequence EPSASLPNPPSKKIKLSDEPV. At K295 the chain carries N6-acetyllysine. S296 bears the Phosphoserine mark.

The protein belongs to the RNase H2 subunit B family. The RNase H2 complex is a heterotrimer composed of the catalytic subunit RNASEH2A and the non-catalytic subunits RNASEH2B and RNASEH2C. Widely expressed.

The protein resides in the nucleus. Functionally, non catalytic subunit of RNase H2, an endonuclease that specifically degrades the RNA of RNA:DNA hybrids. Participates in DNA replication, possibly by mediating the removal of lagging-strand Okazaki fragment RNA primers during DNA replication. Mediates the excision of single ribonucleotides from DNA:RNA duplexes. This chain is Ribonuclease H2 subunit B (RNASEH2B), found in Homo sapiens (Human).